The following is a 256-amino-acid chain: Cytokine-inducible SH2-containing protein (256 aa).

The SH2 domain maps to 81 to 162 (WYWGSITASE…PDVVSLVQHY (82 aa)). Positions 168–190 (ADTRSDSPDPAPTPALPVSKPDA) are disordered. Residues 207–255 (KLVQPFVRRSSARSLQHLCRLVINRLVTDVDCLPLPRRMADYLRQYPFQ) form the SOCS box domain.

As to quaternary structure, stably associated with the tyrosine-phosphorylated IL3 receptor beta chain and tyrosine-phosphorylated EPO receptor (EPOR).

It participates in protein modification; protein ubiquitination. Its function is as follows. SOCS family proteins form part of a classical negative feedback system that regulates cytokine signal transduction. CIS is involved in the negative regulation of cytokines that signal through the JAK-STAT5 pathway such as erythropoietin, prolactin and interleukin 3 (IL3) receptor. Inhibits STAT5 trans-activation by suppressing its tyrosine phosphorylation. May be a substrate recognition component of a SCF-like ECS (Elongin BC-CUL2/5-SOCS-box protein) E3 ubiquitin-protein ligase complex which mediates the ubiquitination and subsequent proteasomal degradation of target proteins. The sequence is that of Cytokine-inducible SH2-containing protein (Cish) from Rattus norvegicus (Rat).